A 213-amino-acid polypeptide reads, in one-letter code: Protein SRN2 (213 aa).

In terms of domain architecture, VPS37 C-terminal spans 128-213 (SKYVASWQDY…TWDKQGNLKY (86 aa)).

It belongs to the VPS37 family. As to quaternary structure, component of the ESCRT-I complex (endosomal sorting complex required for transport I) which consists of STP22, VPS28, SRN2 and MVB12 in a 1:1:1:1 stoichiometry. Interacts with STP22 and MVB12.

Its subcellular location is the cytoplasm. It is found in the endosome. The protein localises to the late endosome membrane. Functionally, component of the ESCRT-I complex, a regulator of vesicular trafficking process. Required for normal endocytic and biosynthetic traffic to the yeast vacuole. The sequence is that of Protein SRN2 (SRN2) from Saccharomyces cerevisiae (strain ATCC 204508 / S288c) (Baker's yeast).